A 514-amino-acid polypeptide reads, in one-letter code: ATP synthase subunit alpha (514 aa).

170–177 (GDRQTGKT) is an ATP binding site.

Belongs to the ATPase alpha/beta chains family. In terms of assembly, F-type ATPases have 2 components, CF(1) - the catalytic core - and CF(0) - the membrane proton channel. CF(1) has five subunits: alpha(3), beta(3), gamma(1), delta(1), epsilon(1). CF(0) has three main subunits: a(1), b(2) and c(9-12). The alpha and beta chains form an alternating ring which encloses part of the gamma chain. CF(1) is attached to CF(0) by a central stalk formed by the gamma and epsilon chains, while a peripheral stalk is formed by the delta and b chains.

The protein resides in the cell inner membrane. It carries out the reaction ATP + H2O + 4 H(+)(in) = ADP + phosphate + 5 H(+)(out). Produces ATP from ADP in the presence of a proton gradient across the membrane. The alpha chain is a regulatory subunit. The sequence is that of ATP synthase subunit alpha from Acinetobacter baumannii (strain AB307-0294).